The following is a 357-amino-acid chain: Arginine kinase (357 aa).

Ala2 carries the post-translational modification N-acetylalanine. The region spanning 9-91 (KLEEGFKKLE…FDPIIEDYHK (83 aa)) is the Phosphagen kinase N-terminal domain. 64-68 (GVGVY) is an L-arginine binding site. In terms of domain architecture, Phosphagen kinase C-terminal spans 119-356 (FVISTRVRCG…LELIKIEKEM (238 aa)). Residues 122–126 (STRVR) and His185 each bind ATP. Residue Glu225 participates in L-arginine binding. Arg229 lines the ATP pocket. Residue Cys271 participates in L-arginine binding. ATP contacts are provided by residues 280-284 (RASVH) and 309-314 (RGTRGE). Glu314 serves as a coordination point for L-arginine.

Belongs to the ATP:guanido phosphotransferase family.

The enzyme catalyses L-arginine + ATP = N(omega)-phospho-L-arginine + ADP + H(+). This is Arginine kinase from Callinectes sapidus (Blue crab).